Reading from the N-terminus, the 417-residue chain is Serine hydroxymethyltransferase 1 (417 aa).

(6S)-5,6,7,8-tetrahydrofolate contacts are provided by residues Leu-121 and 125–127; that span reads GHL. The residue at position 229 (Lys-229) is an N6-(pyridoxal phosphate)lysine. 354–356 is a binding site for (6S)-5,6,7,8-tetrahydrofolate; it reads SPF.

Belongs to the SHMT family. As to quaternary structure, homodimer. It depends on pyridoxal 5'-phosphate as a cofactor.

It is found in the cytoplasm. The catalysed reaction is (6R)-5,10-methylene-5,6,7,8-tetrahydrofolate + glycine + H2O = (6S)-5,6,7,8-tetrahydrofolate + L-serine. It participates in one-carbon metabolism; tetrahydrofolate interconversion. Its pathway is amino-acid biosynthesis; glycine biosynthesis; glycine from L-serine: step 1/1. Its function is as follows. Catalyzes the reversible interconversion of serine and glycine with tetrahydrofolate (THF) serving as the one-carbon carrier. This reaction serves as the major source of one-carbon groups required for the biosynthesis of purines, thymidylate, methionine, and other important biomolecules. Also exhibits THF-independent aldolase activity toward beta-hydroxyamino acids, producing glycine and aldehydes, via a retro-aldol mechanism. This is Serine hydroxymethyltransferase 1 from Pseudomonas fluorescens (strain ATCC BAA-477 / NRRL B-23932 / Pf-5).